The chain runs to 170 residues: uncharacterized protein (170 aa).

This is an uncharacterized protein from Arabidopsis thaliana (Mouse-ear cress).